The sequence spans 413 residues: Zona pellucida-like domain-containing protein 1 (413 aa).

An N-terminal signal peptide occupies residues 1–19 (MEQICLIILLISKALSVGA). Gln20 is modified (pyrrolidone carboxylic acid). The Extracellular portion of the chain corresponds to 20–370 (QFNGYNCDAN…PVFRMNTVTS (351 aa)). In terms of domain architecture, ZP spans 43–320 (YCGVQTITLK…PICGSRKKRD (278 aa)). 2 cysteine pairs are disulfide-bonded: Cys44–Cys155 and Cys79–Cys104. N-linked (GlcNAc...) asparagine glycans are attached at residues Asn85, Asn121, Asn129, Asn164, Asn181, and Asn194. 2 cysteine pairs are disulfide-bonded: Cys235/Cys296 and Cys255/Cys313. Residue Asn351 is glycosylated (N-linked (GlcNAc...) asparagine). The chain crosses the membrane as a helical span at residues 371–391 (ALISGIIILGVMSLCFFILSL). The Cytoplasmic portion of the chain corresponds to 392 to 413 (TLLKGKRAPPTILSGARNPAFN).

Proteolytically cleaved before the transmembrane segment to yield the secreted form found in the extracellular matrix of the cupula. Post-translationally, N-glycosylated. Detected in the acellular cupulae of the vestibular organ, and also in support cells adjacent to the cupula (at protein level).

Its subcellular location is the cytoplasmic vesicle membrane. The protein localises to the secreted. The protein resides in the extracellular space. It localises to the extracellular matrix. Functionally, glycoprotein which is a component of the gelatinous extracellular matrix in the cupulae of the vestibular organ. This is Zona pellucida-like domain-containing protein 1 from Salmo salar (Atlantic salmon).